We begin with the raw amino-acid sequence, 78 residues long: Esculentin-2Vb (78 aa).

An N-terminal signal peptide occupies residues 1–22; the sequence is MFTMKKSLLLLFFLGTISLSLC. A propeptide spanning residues 23–39 is cleaved from the precursor; sequence EEERGADEEEGDGEKLM. Cysteine 72 and cysteine 78 are disulfide-bonded.

In terms of tissue distribution, expressed by the skin glands.

It is found in the secreted. Antimicrobial peptide. The sequence is that of Esculentin-2Vb from Odorrana versabilis (Chinese bamboo leaf odorous frog).